We begin with the raw amino-acid sequence, 508 residues long: Protein disulfide-isomerase (508 aa).

Positions 1 to 17 (MLRRALLCLAVAALVRA) are cleaved as a signal peptide. The region spanning 18–134 (DAPEEEDHVL…IVNWLKKRTG (117 aa)) is the Thioredoxin 1 domain. Active-site nucleophile residues include cysteine 53 and cysteine 56. The cysteines at positions 53 and 56 are disulfide-linked. N6-acetyllysine is present on lysine 200. Residues lysine 222 and lysine 271 each carry the N6-succinyllysine modification. Phosphoserine is present on serine 331. Positions 349–475 (GKIKPHLMSQ…FKKFLESGGQ (127 aa)) constitute a Thioredoxin 2 domain. Residue serine 357 is modified to Phosphoserine; by FAM20C. Active-site nucleophile residues include cysteine 397 and cysteine 400. A disulfide bridge links cysteine 397 with cysteine 400. The residue at position 427 (serine 427) is a Phosphoserine. The interval 471–508 (ESGGQDGAGDDDDLEDLEEAEEPDMEEDDDQKAVKDEL) is disordered. Residues 478–500 (AGDDDDLEDLEEAEEPDMEEDDD) show a composition bias toward acidic residues. The Prevents secretion from ER motif lies at 505-508 (KDEL).

It belongs to the protein disulfide isomerase family. In terms of assembly, heterodimer; heterodimerizes with the protein microsomal triglyceride transfer MTTP. Homodimer. Monomers and homotetramers may also occur. Interacts with P4HA2, forming a heterotetramer consisting of 2 alpha subunits (P4HA2) and 2 beta (P4HB), where P4HB plays the role of a structural subunit; this tetramer catalyzes the formation of 4-hydroxyproline in collagen. Also constitutes the structural subunit of the microsomal triacylglycerol transfer protein MTTP in mammalian cells. Stabilizes both enzymes and retain them in the ER without contributing to the catalytic activity. Binds UBQLN1. Interacts with ERO1B. Binds to CD4, and upon HIV-1 binding to the cell membrane, is part of a P4HB/PDI-CD4-CXCR4-gp120 complex. Interacts with ILDR2. Interacts with ERN1/IRE1A (via N-terminus); the interaction is enhanced by phosphorylation of P4HB by FAM20C in response to endoplasmic reticulum stress and results in attenuation of ERN1 activity. Phosphorylation of Ser-357 by FAM20C is induced by endoplasmic reticulum stress and results in a functional switch from oxidoreductase to molecular chaperone. It also promotes interaction with ERN1.

It is found in the endoplasmic reticulum. Its subcellular location is the endoplasmic reticulum lumen. The protein localises to the melanosome. It localises to the cell membrane. The catalysed reaction is Catalyzes the rearrangement of -S-S- bonds in proteins.. Its function is as follows. This multifunctional protein catalyzes the formation, breakage and rearrangement of disulfide bonds. At the cell surface, seems to act as a reductase that cleaves disulfide bonds of proteins attached to the cell. May therefore cause structural modifications of exofacial proteins. Inside the cell, seems to form/rearrange disulfide bonds of nascent proteins. At high concentrations and following phosphorylation by FAM20C, functions as a chaperone that inhibits aggregation of misfolded proteins. At low concentrations, facilitates aggregation (anti-chaperone activity). May be involved with other chaperones in the structural modification of the TG precursor in hormone biogenesis. Also acts as a structural subunit of various enzymes such as prolyl 4-hydroxylase and microsomal triacylglycerol transfer protein MTTP. Receptor for LGALS9; the interaction retains P4HB at the cell surface of Th2 T helper cells, increasing disulfide reductase activity at the plasma membrane, altering the plasma membrane redox state and enhancing cell migration. The sequence is that of Protein disulfide-isomerase (P4HB) from Homo sapiens (Human).